Reading from the N-terminus, the 283-residue chain is Probable aquaporin NIP4-2 (283 aa).

At Met-1 the chain carries N-acetylmethionine. A compositionally biased stretch (basic and acidic residues) spans 1–21 (MTSHGEEIEDEQISRIEKGNC). The interval 1-23 (MTSHGEEIEDEQISRIEKGNCKD) is disordered. 2 helical membrane-spanning segments follow: residues 51–71 (GTYF…LYGG) and 77–97 (GICV…GHIS). The short motif at 102–104 (NPA) is the NPA 1 element. Transmembrane regions (helical) follow at residues 120–140 (VPLY…TLRL), 161–181 (ALVA…GVAT), and 189–209 (LAGI…GPIS). An NPA 2 motif is present at residues 214–216 (NPA). The chain crosses the membrane as a helical span at residues 231–251 (IWVYIVGPFVGIFAGGFVYNF). Ser-267 carries the phosphoserine modification.

The protein belongs to the MIP/aquaporin (TC 1.A.8) family. NIP (TC 1.A.8.12) subfamily.

It localises to the membrane. Its function is as follows. Aquaporins facilitate the transport of water and small neutral solutes across cell membranes. The sequence is that of Probable aquaporin NIP4-2 (NIP4-2) from Arabidopsis thaliana (Mouse-ear cress).